The sequence spans 163 residues: Large ribosomal subunit protein bL17 (163 aa).

The segment covering 123 to 135 has biased composition (low complexity); the sequence is AEASRATRASASK. The interval 123–163 is disordered; sequence AEASRATRASASKKAAEEAETEEVVEAPAEETATEEAAEEK. Residues 140-163 show a composition bias toward acidic residues; sequence EAETEEVVEAPAEETATEEAAEEK.

This sequence belongs to the bacterial ribosomal protein bL17 family. Part of the 50S ribosomal subunit. Contacts protein L32.

This Corynebacterium glutamicum (strain ATCC 13032 / DSM 20300 / JCM 1318 / BCRC 11384 / CCUG 27702 / LMG 3730 / NBRC 12168 / NCIMB 10025 / NRRL B-2784 / 534) protein is Large ribosomal subunit protein bL17.